The sequence spans 359 residues: Very-long-chain (3R)-3-hydroxyacyl-CoA dehydratase (359 aa).

The Cytoplasmic portion of the chain corresponds to 1–144; the sequence is MSALTPHVYW…RKDPFLGLKK (144 aa). In terms of domain architecture, CS spans 3–92; it reads ALTPHVYWAQ…QEEVWWNRLT (90 aa). Positions 109 to 133 form a coiled coil; it reads LDESDAEMELREKEEKINKVSFESR. The chain crosses the membrane as a helical span at residues 145-165; the sequence is GFLFMYNLVQFLGYSWIFVNM. Topologically, residues 166 to 186 are lumenal; it reads TVRLFILGQDSFYDTFHTIAD. The chain crosses the membrane as a helical span at residues 187 to 207; it reads VMYFCQMLAIMEVINPAVGLV. Residues 208-209 lie on the Cytoplasmic side of the membrane; sequence KT. The chain crosses the membrane as a helical span at residues 210–230; sequence GVMPAFIQVMGRNFILFVIFG. Residues 231-239 are Lumenal-facing; it reads SLEDMQNKP. The helical transmembrane segment at 240–260 threads the bilayer; it reads VVFFVFYLWSTIEIFRYPFYM. Residues 261–277 lie on the Cytoplasmic side of the membrane; it reads LACIDTEWKLLTWLRYT. Residues 278–298 form a helical membrane-spanning segment; that stretch reads IWMPLYPLGVLAEAVAVIQSI. Active-site residues include tyrosine 283 and glutamate 290. Topologically, residues 299 to 317 are lumenal; sequence PIFDETKLLSIPLPKATGL. The chain crosses the membrane as a helical span at residues 318–338; the sequence is SLSFSYILQLYLVVMFLGLFI. The Cytoplasmic portion of the chain corresponds to 339–359; sequence NFRHLFKQRTRRFRTKKRKAN.

Belongs to the very long-chain fatty acids dehydratase HACD family.

It localises to the endoplasmic reticulum membrane. It carries out the reaction a very-long-chain (3R)-3-hydroxyacyl-CoA = a very-long-chain (2E)-enoyl-CoA + H2O. It catalyses the reaction (3R)-hydroxyhexadecanoyl-CoA = (2E)-hexadecenoyl-CoA + H2O. Its pathway is lipid metabolism; fatty acid biosynthesis. Functionally, catalyzes the third of the four reactions of the long-chain fatty acids elongation cycle. This endoplasmic reticulum-bound enzymatic process, allows the addition of two carbons to the chain of long- and very long-chain fatty acids/VLCFAs per cycle. This enzyme catalyzes the dehydration of the 3-hydroxyacyl-CoA intermediate into trans-2,3-enoyl-CoA, within each cycle of fatty acid elongation. Thereby, it participates in the production of VLCFAs of different chain lengths that are involved in multiple biological processes as precursors of membrane lipids and lipid mediators. Involved in Rac1-signaling pathways leading to the modulation of gene expression. The sequence is that of Very-long-chain (3R)-3-hydroxyacyl-CoA dehydratase from Danio rerio (Zebrafish).